Consider the following 136-residue polypeptide: Keratin-associated protein 9-3 (136 aa).

Repeat copies occupy residues 3–7, 21–25, 31–35, 36–40, 41–45, 46–50, 87–91, 97–101, 107–111, 117–121, and 126–130. Residues 21–130 form an 11 X 5 AA repeats of C-C-[AEQVR]-[ALPTV]-[AGHST] region; that stretch reads CCQPTCTQSS…ACCCYCCQPS (110 aa).

Belongs to the KRTAP type 9 family. In terms of assembly, interacts with hair keratins.

Its function is as follows. In the hair cortex, hair keratin intermediate filaments are embedded in an interfilamentous matrix, consisting of hair keratin-associated proteins (KRTAP), which are essential for the formation of a rigid and resistant hair shaft through their extensive disulfide bond cross-linking with abundant cysteine residues of hair keratins. The matrix proteins include the high-sulfur and high-glycine-tyrosine keratins. The sequence is that of Keratin-associated protein 9-3 from Mus musculus (Mouse).